Consider the following 129-residue polypeptide: Large ribosomal subunit protein bL12 (129 aa).

It belongs to the bacterial ribosomal protein bL12 family. As to quaternary structure, homodimer. Part of the ribosomal stalk of the 50S ribosomal subunit. Forms a multimeric L10(L12)X complex, where L10 forms an elongated spine to which 2 to 4 L12 dimers bind in a sequential fashion. Binds GTP-bound translation factors.

Functionally, forms part of the ribosomal stalk which helps the ribosome interact with GTP-bound translation factors. Is thus essential for accurate translation. The sequence is that of Large ribosomal subunit protein bL12 from Thermosipho melanesiensis (strain DSM 12029 / CIP 104789 / BI429).